The sequence spans 85 residues: Conotoxin Lt28.4 (85 aa).

The first 21 residues, 1-21 (MPKLEMMLLVLLILPLCYIDA), serve as a signal peptide directing secretion. Residues 22–40 (VGPPPPWNMEDEIIEHWQK) constitute a propeptide that is removed on maturation.

It belongs to the conotoxin D superfamily. Post-translationally, contains 5 disulfide bonds. Expressed by the venom duct.

The protein resides in the secreted. Its function is as follows. Probable neurotoxin. The protein is Conotoxin Lt28.4 of Conus litteratus (Lettered cone).